Consider the following 363-residue polypeptide: MSGNTYGKLFTVTTAGESHGPALVAIVDGCPPGLEISLADLQHDLDRRKPGTSRHTTQRQEADEVEILSGVFEGRTTGCSIGLLIRNTDQKSKDYSAIKDLFRPAHADYTYHHKYGIRDYRGGGRSSARETAMRVAAGAIAKKFLATQGITVRGYMSQLGPIEIPFKTWESVEQNAFFSPDPDKVPELEAYMDQLRRDQDSVGAKITVVAEGVMPGLGEPIFDRLDAELAHALMSINAVKGVEIGAGFASVAQRGTEHRDELTPEGFLSNNAGGILGGISSGQPIVAHLALKPTSSITTPGRSIDVDGNPVDVITKGRHDPCVGIRATPIAEAMMAIALMDHLLRHRAQNADVQVNTPVLGQR.

2 residues coordinate NADP(+): Arg-48 and Arg-54. Residues 125 to 127 (RSS), 237 to 238 (NA), Gly-277, 292 to 296 (KPTSS), and Arg-318 each bind FMN.

Belongs to the chorismate synthase family. In terms of assembly, homotetramer. It depends on FMNH2 as a cofactor.

The enzyme catalyses 5-O-(1-carboxyvinyl)-3-phosphoshikimate = chorismate + phosphate. The protein operates within metabolic intermediate biosynthesis; chorismate biosynthesis; chorismate from D-erythrose 4-phosphate and phosphoenolpyruvate: step 7/7. In terms of biological role, catalyzes the anti-1,4-elimination of the C-3 phosphate and the C-6 proR hydrogen from 5-enolpyruvylshikimate-3-phosphate (EPSP) to yield chorismate, which is the branch point compound that serves as the starting substrate for the three terminal pathways of aromatic amino acid biosynthesis. This reaction introduces a second double bond into the aromatic ring system. The polypeptide is Chorismate synthase (Pseudomonas putida (strain ATCC 700007 / DSM 6899 / JCM 31910 / BCRC 17059 / LMG 24140 / F1)).